The sequence spans 119 residues: Ribonuclease P protein component (119 aa).

Belongs to the RnpA family. Consists of a catalytic RNA component (M1 or rnpB) and a protein subunit.

It catalyses the reaction Endonucleolytic cleavage of RNA, removing 5'-extranucleotides from tRNA precursor.. RNaseP catalyzes the removal of the 5'-leader sequence from pre-tRNA to produce the mature 5'-terminus. It can also cleave other RNA substrates such as 4.5S RNA. The protein component plays an auxiliary but essential role in vivo by binding to the 5'-leader sequence and broadening the substrate specificity of the ribozyme. The chain is Ribonuclease P protein component from Escherichia coli O157:H7.